Reading from the N-terminus, the 312-residue chain is Malate dehydrogenase (312 aa).

NAD(+)-binding positions include 7 to 13 (GAAGGIG) and D34. The substrate site is built by R81 and R87. NAD(+) is bound by residues N94 and 117 to 119 (ITN). 2 residues coordinate substrate: N119 and R153. Catalysis depends on H177, which acts as the Proton acceptor. M227 is a binding site for NAD(+).

This sequence belongs to the LDH/MDH superfamily. MDH type 1 family. In terms of assembly, homodimer.

It catalyses the reaction (S)-malate + NAD(+) = oxaloacetate + NADH + H(+). Its function is as follows. Catalyzes the reversible oxidation of malate to oxaloacetate. This is Malate dehydrogenase from Escherichia coli (strain SE11).